Here is a 443-residue protein sequence, read N- to C-terminus: UPF0597 protein DVU_0440 (443 aa).

The protein belongs to the UPF0597 family.

The polypeptide is UPF0597 protein DVU_0440 (Nitratidesulfovibrio vulgaris (strain ATCC 29579 / DSM 644 / CCUG 34227 / NCIMB 8303 / VKM B-1760 / Hildenborough) (Desulfovibrio vulgaris)).